A 117-amino-acid polypeptide reads, in one-letter code: Immunoglobulin kappa variable 1D-12 (117 aa).

Residues 1 to 22 (MDMMVPAQLLGLLLLWFPGSRC) form the signal peptide. The framework-1 stretch occupies residues 23–45 (DIQMTQSPSSVSASVGDRVTITC). In terms of domain architecture, Ig-like spans 24-117 (IQMTQSPSSV…YYCQQANSFP (94 aa)). Residues C45 and C110 are joined by a disulfide bond. Positions 46-56 (RASQGISSWLA) are complementarity-determining-1. Positions 57–71 (WYQQKPGKAPKLLIY) are framework-2. Residues 72-78 (AASSLQS) are complementarity-determining-2. Residues 79–110 (GVPSRFSGSGSGTDFTLTISSLQPEDFATYYC) form a framework-3 region. The complementarity-determining-3 stretch occupies residues 111–117 (QQANSFP).

Immunoglobulins are composed of two identical heavy chains and two identical light chains; disulfide-linked.

It localises to the secreted. It is found in the cell membrane. Functionally, v region of the variable domain of immunoglobulin light chains that participates in the antigen recognition. Immunoglobulins, also known as antibodies, are membrane-bound or secreted glycoproteins produced by B lymphocytes. In the recognition phase of humoral immunity, the membrane-bound immunoglobulins serve as receptors which, upon binding of a specific antigen, trigger the clonal expansion and differentiation of B lymphocytes into immunoglobulins-secreting plasma cells. Secreted immunoglobulins mediate the effector phase of humoral immunity, which results in the elimination of bound antigens. The antigen binding site is formed by the variable domain of one heavy chain, together with that of its associated light chain. Thus, each immunoglobulin has two antigen binding sites with remarkable affinity for a particular antigen. The variable domains are assembled by a process called V-(D)-J rearrangement and can then be subjected to somatic hypermutations which, after exposure to antigen and selection, allow affinity maturation for a particular antigen. The protein is Immunoglobulin kappa variable 1D-12 of Homo sapiens (Human).